Consider the following 304-residue polypeptide: Recombination-associated protein RdgC (304 aa).

The protein belongs to the RdgC family.

The protein localises to the cytoplasm. It is found in the nucleoid. In terms of biological role, may be involved in recombination. This chain is Recombination-associated protein RdgC, found in Shewanella sp. (strain ANA-3).